The following is a 202-amino-acid chain: LexA repressor (202 aa).

A DNA-binding region (H-T-H motif) is located at residues 28–48 (RAEIAQRLGFRSPNAAEEHLK). Catalysis depends on for autocatalytic cleavage activity residues Ser-119 and Lys-156.

This sequence belongs to the peptidase S24 family. As to quaternary structure, homodimer.

The catalysed reaction is Hydrolysis of Ala-|-Gly bond in repressor LexA.. Its function is as follows. Represses a number of genes involved in the response to DNA damage (SOS response), including recA and lexA. Binds to the 16 bp palindromic sequence 5'-CTGTATATATATACAG-3'. In the presence of single-stranded DNA, RecA interacts with LexA causing an autocatalytic cleavage which disrupts the DNA-binding part of LexA, leading to derepression of the SOS regulon and eventually DNA repair. This chain is LexA repressor, found in Yersinia enterocolitica serotype O:8 / biotype 1B (strain NCTC 13174 / 8081).